The chain runs to 283 residues: ATP synthase gamma chain (283 aa).

It belongs to the ATPase gamma chain family. F-type ATPases have 2 components, CF(1) - the catalytic core - and CF(0) - the membrane proton channel. CF(1) has five subunits: alpha(3), beta(3), gamma(1), delta(1), epsilon(1). CF(0) has three main subunits: a, b and c.

The protein resides in the cell membrane. In terms of biological role, produces ATP from ADP in the presence of a proton gradient across the membrane. The gamma chain is believed to be important in regulating ATPase activity and the flow of protons through the CF(0) complex. The sequence is that of ATP synthase gamma chain from Exiguobacterium sibiricum (strain DSM 17290 / CCUG 55495 / CIP 109462 / JCM 13490 / 255-15).